Reading from the N-terminus, the 517-residue chain is RNA-binding region-containing protein 3 (517 aa).

Residues 1–26 (MAAPEQPLAISRGCTSSSSLSPPRGD) form a disordered region. A necessary for interaction with PDCD7 region spans residues 1-257 (MAAPEQPLAI…STDDEDRQRM (257 aa)). At Ser-21 the chain carries Phosphoserine. The RRM 1 domain occupies 27-102 (RTLLVRHLPA…HTLVVEFAKE (76 aa)). Disordered regions lie at residues 106–130 (VHSPCPTSGSEKKKRSDDPVEDDKE) and 213–254 (MPLH…DEDR). Ser-108 carries the phosphoserine modification. Positions 115 to 130 (SEKKKRSDDPVEDDKE) are enriched in basic and acidic residues. The segment at 211-380 (DYMPLHAPLP…LDITEEIKED (170 aa)) is necessary for binding to m(7)G-capped U12 snRNA. Pro residues predominate over residues 217–230 (APLPPTSPQPPEEP). Residues 231-252 (PLPDEDEELSSEESEYESTDDE) are compositionally biased toward acidic residues. The region spanning 420 to 503 (CRIYVKNLAK…KPMVVQFARS (84 aa)) is the RRM 2 domain.

As to quaternary structure, component of the U11/U12 snRNPs that are part of the U12-type spliceosome. Found in a complex with m(7)G-capped U12 snRNA. Interacts with PDCD7. As to expression, highly expressed in pancreas and kidney. Detected at lower levels in heart, brain, placenta, lung, liver, spleen, thymus, prostate, testis, ovary, small intestine, colon and leukocytes.

The protein localises to the nucleus. Functionally, participates in pre-mRNA U12-dependent splicing, performed by the minor spliceosome which removes U12-type introns. U12-type introns comprises less than 1% of all non-coding sequences. Binds to the 3'-stem-loop of m(7)G-capped U12 snRNA. The protein is RNA-binding region-containing protein 3 (RNPC3) of Homo sapiens (Human).